Here is a 97-residue protein sequence, read N- to C-terminus: Co-chaperonin GroES (97 aa).

This sequence belongs to the GroES chaperonin family. In terms of assembly, heptamer of 7 subunits arranged in a ring. Interacts with the chaperonin GroEL.

Its subcellular location is the cytoplasm. Functionally, together with the chaperonin GroEL, plays an essential role in assisting protein folding. The GroEL-GroES system forms a nano-cage that allows encapsulation of the non-native substrate proteins and provides a physical environment optimized to promote and accelerate protein folding. GroES binds to the apical surface of the GroEL ring, thereby capping the opening of the GroEL channel. In Yersinia enterocolitica, this protein is Co-chaperonin GroES.